A 150-amino-acid chain; its full sequence is UPF0178 protein Shewana3_1627 (150 aa).

The protein belongs to the UPF0178 family.

The protein is UPF0178 protein Shewana3_1627 of Shewanella sp. (strain ANA-3).